Reading from the N-terminus, the 139-residue chain is Small ribosomal subunit protein uS12 (139 aa).

Residue Asp102 is modified to 3-methylthioaspartic acid.

The protein belongs to the universal ribosomal protein uS12 family. In terms of assembly, part of the 30S ribosomal subunit. Contacts proteins S8 and S17. May interact with IF1 in the 30S initiation complex.

Its function is as follows. With S4 and S5 plays an important role in translational accuracy. Interacts with and stabilizes bases of the 16S rRNA that are involved in tRNA selection in the A site and with the mRNA backbone. Located at the interface of the 30S and 50S subunits, it traverses the body of the 30S subunit contacting proteins on the other side and probably holding the rRNA structure together. The combined cluster of proteins S8, S12 and S17 appears to hold together the shoulder and platform of the 30S subunit. The sequence is that of Small ribosomal subunit protein uS12 from Mycoplasma capricolum subsp. capricolum (strain California kid / ATCC 27343 / NCTC 10154).